Reading from the N-terminus, the 258-residue chain is MIRPRYGWMYSSGIAVHLCAAVCAHSAVPAAWTFAEQTQAQKTDTPLDSSSYAVTSPEEAPNEADPFEKELEHAFERAHVSTGGADSSSHADFVHMEEAGRAHASANRWYHETFDSRQRPSSAVLYEGAQLLHTVHWHYVGDRLFPCEKIITTPHTRIRARYNFSGKIVAYEMHTRGVLVYARTYRYDAHARICEKEETTARGNERITYEYRGKVDVLEKRYRNGVLQAIIHQKEGAQDVQVFERGKEIYSTKEVHDE.

Over residues 40–54 (AQKTDTPLDSSSYAV) the composition is skewed to polar residues. The segment at 40–63 (AQKTDTPLDSSSYAVTSPEEAPNE) is disordered.

This is an uncharacterized protein from Treponema pallidum (strain Nichols).